The chain runs to 68 residues: MKFTATFLMIAIFVLMVEPGECGWGSFFKKAAHVGKHVGKAALTHYLGDKQELNKRAVDEDPNVIVFE.

A signal peptide spans 1-22 (MKFTATFLMIAIFVLMVEPGEC). A propeptide spanning residues 48–68 (GDKQELNKRAVDEDPNVIVFE) is cleaved from the precursor.

The protein belongs to the pleurocidin family. As to expression, goblet cells.

It localises to the secreted. Functionally, antimicrobial peptide with potent activity against Gram-positive and Gram-negative bacteria. Activity against E.coli and B.subtilis. Weaker activity against L.mucor, s.marcescens and P.aeruginosa. May play a role in innate host defense. This Pseudopleuronectes americanus (Winter flounder) protein is Pleurocidin (ple2).